We begin with the raw amino-acid sequence, 489 residues long: Glycogen synthase (489 aa).

Position 15 (Lys15) interacts with ADP-alpha-D-glucose.

It belongs to the glycosyltransferase 1 family. Bacterial/plant glycogen synthase subfamily.

It carries out the reaction [(1-&gt;4)-alpha-D-glucosyl](n) + ADP-alpha-D-glucose = [(1-&gt;4)-alpha-D-glucosyl](n+1) + ADP + H(+). It functions in the pathway glycan biosynthesis; glycogen biosynthesis. Synthesizes alpha-1,4-glucan chains using ADP-glucose. The polypeptide is Glycogen synthase (Francisella tularensis subsp. novicida (strain U112)).